We begin with the raw amino-acid sequence, 168 residues long: Photosystem I assembly protein Ycf3 (168 aa).

TPR repeat units follow at residues A35–P68, S72–L105, and G120–N153.

The protein belongs to the Ycf3 family.

It localises to the plastid. It is found in the chloroplast thylakoid membrane. Essential for the assembly of the photosystem I (PSI) complex. May act as a chaperone-like factor to guide the assembly of the PSI subunits. This Phaseolus vulgaris (Kidney bean) protein is Photosystem I assembly protein Ycf3.